Reading from the N-terminus, the 156-residue chain is Peptide deformylase 1 (156 aa).

2 residues coordinate Fe cation: Cys90 and His132. Glu133 is an active-site residue. A Fe cation-binding site is contributed by His136.

It belongs to the polypeptide deformylase family. Requires Fe(2+) as cofactor.

It carries out the reaction N-terminal N-formyl-L-methionyl-[peptide] + H2O = N-terminal L-methionyl-[peptide] + formate. In terms of biological role, removes the formyl group from the N-terminal Met of newly synthesized proteins. Requires at least a dipeptide for an efficient rate of reaction. N-terminal L-methionine is a prerequisite for activity but the enzyme has broad specificity at other positions. This is Peptide deformylase 1 from Bacillus anthracis.